Here is a 475-residue protein sequence, read N- to C-terminus: Ankyrin repeat, SAM and basic leucine zipper domain-containing protein 1 (475 aa).

The tract at residues 1 to 23 (MAAARFRGLAVAGGGESSESEDD) is disordered. Phosphoserine occurs at positions 17, 18, and 20. ANK repeat units lie at residues 45 to 74 (EKNE…SVDS), 78 to 107 (YGWT…KASF), 110 to 144 (DKQT…DPNV), 148 to 177 (RLMT…EVNT), 181 to 210 (NGYT…NKML), and 214 to 243 (DGKT…PLEG). Residues 272–334 (SYTAFGDLEI…KILAALKELE (63 aa)) enclose the SAM domain.

In terms of assembly, interacts with DDX4, PIWIL1, RANBP9 and TDRD1.

It is found in the cytoplasm. Plays a central role during spermatogenesis by repressing transposable elements and preventing their mobilization, which is essential for the germline integrity. Acts via the piRNA metabolic process, which mediates the repression of transposable elements during meiosis by forming complexes composed of piRNAs and Piwi proteins and governs the methylation and subsequent repression of transposons. Its association with pi-bodies suggests a participation in the primary piRNAs metabolic process. Required prior to the pachytene stage to facilitate the production of multiple types of piRNAs, including those associated with repeats involved in the regulation of retrotransposons. May act by mediating protein-protein interactions during germ cell maturation. The sequence is that of Ankyrin repeat, SAM and basic leucine zipper domain-containing protein 1 (ASZ1) from Equus caballus (Horse).